The following is a 162-amino-acid chain: UPF0262 protein Pden_1958 (162 aa).

Positions methionine 1–serine 22 are disordered.

This sequence belongs to the UPF0262 family.

The polypeptide is UPF0262 protein Pden_1958 (Paracoccus denitrificans (strain Pd 1222)).